Consider the following 341-residue polypeptide: MASEAPPFWWDEPDWRALALAPAAWIYGRVSGRRLIRAVPPRVSLPVLCVGNFTVGGAGKTPTAIAFARGAIARGMKPGIVSRGYGGNYSGLHLVDPGHDGARHVGDEPLLLARHAAVALSPDRVKAAEYLKSLGCDFIIMDDGFQSARLHADFSLLVVDASRGIGNGRVIPAGPLRAPLTDQMRKTDALLCIGKGNGADFVIRQAARAGRPIYHAQLRPSSSATVAGRRWLAFAGIGNPDKFYESVRQAGGEVVETHSFADHYSFEPDDIRGLVDMARRQGLGLITTAKDHVRLATMPGVPPEFLSKLAVLDVDLEFDRTDALDHILDTVVERFKSRLHG.

Position 54–61 (54–61 (TVGGAGKT)) interacts with ATP.

Belongs to the LpxK family.

It catalyses the reaction a lipid A disaccharide + ATP = a lipid IVA + ADP + H(+). Its pathway is glycolipid biosynthesis; lipid IV(A) biosynthesis; lipid IV(A) from (3R)-3-hydroxytetradecanoyl-[acyl-carrier-protein] and UDP-N-acetyl-alpha-D-glucosamine: step 6/6. Functionally, transfers the gamma-phosphate of ATP to the 4'-position of a tetraacyldisaccharide 1-phosphate intermediate (termed DS-1-P) to form tetraacyldisaccharide 1,4'-bis-phosphate (lipid IVA). This Brucella melitensis biotype 1 (strain ATCC 23456 / CCUG 17765 / NCTC 10094 / 16M) protein is Tetraacyldisaccharide 4'-kinase.